Here is a 382-residue protein sequence, read N- to C-terminus: Alkanesulfonate monooxygenase (382 aa).

The protein belongs to the SsuD family. Homotetramer.

It catalyses the reaction an alkanesulfonate + FMNH2 + O2 = an aldehyde + FMN + sulfite + H2O + 2 H(+). Catalyzes the desulfonation of aliphatic sulfonates. The sequence is that of Alkanesulfonate monooxygenase from Yersinia pestis bv. Antiqua (strain Antiqua).